Reading from the N-terminus, the 467-residue chain is Neutrophil collagenase (467 aa).

The signal sequence occupies residues 1–20 (MFSLKTLPFLLLLHVQISKA). Residues 21-100 (FPVSSKEKNT…CGVPDSGGFM (80 aa)) constitute a propeptide, activation peptide. Asn-54 and Asn-73 each carry an N-linked (GlcNAc...) asparagine glycan. The Cysteine switch motif lies at 89-96 (PRCGVPDS). Residue Cys-91 participates in Zn(2+) binding. An N-linked (GlcNAc...) asparagine glycan is attached at Asn-112. Asp-157 is a binding site for Ca(2+). Residues His-167 and Asp-169 each contribute to the Zn(2+) site. Asp-174, Gly-175, Asn-177, and Ile-179 together coordinate Ca(2+). His-182 provides a ligand contact to Zn(2+). Residues Gly-189, Gly-191, and Asp-193 each contribute to the Ca(2+) site. Residue His-195 coordinates Zn(2+). Ca(2+) is bound by residues Asp-197 and Glu-200. An N-linked (GlcNAc...) asparagine glycan is attached at Asn-204. His-217 provides a ligand contact to Zn(2+). The active site involves Glu-218. Residues His-221 and His-227 each coordinate Zn(2+). A glycan (N-linked (GlcNAc...) asparagine) is linked at Asn-246. Hemopexin repeat units follow at residues 276 to 325 (PKPC…WPSL), 326 to 372 (PTGI…GFPS), 374 to 420 (VQAI…FPGI), and 421 to 464 (ESKV…WLNC). Cys-279 and Cys-464 are disulfide-bonded. A Ca(2+)-binding site is contributed by Asp-286. Residues Asp-378 and Asp-425 each coordinate Ca(2+).

Belongs to the peptidase M10A family. Ca(2+) is required as a cofactor. It depends on Zn(2+) as a cofactor. In terms of tissue distribution, neutrophils.

It is found in the cytoplasmic granule. Its subcellular location is the secreted. The protein localises to the extracellular space. The protein resides in the extracellular matrix. It catalyses the reaction Cleavage of interstitial collagens in the triple helical domain. Unlike EC 3.4.24.7, this enzyme cleaves type III collagen more slowly than type I.. With respect to regulation, cannot be activated without removal of the activation peptide. Can degrade fibrillar type I, II, and III collagens. This is Neutrophil collagenase (MMP8) from Homo sapiens (Human).